The sequence spans 436 residues: Chromosomal replication initiator protein DnaA (436 aa).

The domain I, interacts with DnaA modulators stretch occupies residues 1-69 (MLADEILELL…AYLYEVKTGK (69 aa)). The interval 69-99 (KKPEVEITSQTKLKNIKQNQVNVKQIKAQSS) is domain II. A domain III, AAA+ region region spans residues 100 to 314 (ILNPGYTFEN…GAIINLNAYA (215 aa)). ATP-binding residues include Gly-144, Gly-146, Lys-147, and Thr-148. The domain IV, binds dsDNA stretch occupies residues 315–436 (SLMRVEITLE…EIKNKILTKG (122 aa)).

The protein belongs to the DnaA family. As to quaternary structure, oligomerizes as a right-handed, spiral filament on DNA at oriC.

The protein resides in the cytoplasm. Functionally, plays an essential role in the initiation and regulation of chromosomal replication. ATP-DnaA binds to the origin of replication (oriC) to initiate formation of the DNA replication initiation complex once per cell cycle. Binds the DnaA box (a 9 base pair repeat at the origin) and separates the double-stranded (ds)DNA. Forms a right-handed helical filament on oriC DNA; dsDNA binds to the exterior of the filament while single-stranded (ss)DNA is stabiized in the filament's interior. The ATP-DnaA-oriC complex binds and stabilizes one strand of the AT-rich DNA unwinding element (DUE), permitting loading of DNA polymerase. After initiation quickly degrades to an ADP-DnaA complex that is not apt for DNA replication. Binds acidic phospholipids. In Campylobacter concisus (strain 13826), this protein is Chromosomal replication initiator protein DnaA.